A 687-amino-acid polypeptide reads, in one-letter code: Glycine--tRNA ligase beta subunit (687 aa).

This sequence belongs to the class-II aminoacyl-tRNA synthetase family. Tetramer of two alpha and two beta subunits.

Its subcellular location is the cytoplasm. It catalyses the reaction tRNA(Gly) + glycine + ATP = glycyl-tRNA(Gly) + AMP + diphosphate. This is Glycine--tRNA ligase beta subunit from Geobacter sp. (strain M21).